Consider the following 938-residue polypeptide: Glutamate receptor ionotropic, NMDA 1 (938 aa).

Residues 1 to 18 form the signal peptide; that stretch reads MSTMHLLTFALLFSCSFA. Residues 19–559 are Extracellular-facing; it reads RAACDPKIVN…TLDSFMQPFQ (541 aa). N-linked (GlcNAc...) asparagine glycosylation is found at asparagine 61, asparagine 203, asparagine 239, asparagine 276, asparagine 300, asparagine 350, asparagine 368, asparagine 440, asparagine 471, and asparagine 491. The cysteines at positions 79 and 308 are disulfide-linked. Disulfide bonds link cysteine 420-cysteine 454 and cysteine 436-cysteine 455. Residues proline 516, threonine 518, and arginine 523 each contribute to the glycine site. The chain crosses the membrane as a helical span at residues 560-580; the sequence is STLWLLVGLSVHVVAVMLYLL. The Cytoplasmic portion of the chain corresponds to 581–602; it reads DRFSPFGRFKVNSEEEEEDALT. The discontinuously helical intramembrane region spans 603–624; that stretch reads LSSAMWFSWGVLLNSGIGEGAP. The tract at residues 603 to 624 is pore-forming; sequence LSSAMWFSWGVLLNSGIGEGAP. The Cytoplasmic portion of the chain corresponds to 625 to 630; it reads RSFSAR. The chain crosses the membrane as a helical span at residues 631 to 647; it reads ILGMVWAGFAMIIVASY. The Extracellular portion of the chain corresponds to 648 to 812; that stretch reads TANLAAFLVL…NAPATLTFEN (165 aa). N-linked (GlcNAc...) asparagine glycosylation occurs at asparagine 674. Residues serine 688 and aspartate 732 each coordinate glycine. Cysteine 744 and cysteine 798 are oxidised to a cystine. An N-linked (GlcNAc...) asparagine glycan is attached at asparagine 771. Residues 813 to 833 form a helical membrane-spanning segment; that stretch reads MAGVFMLVAGGIVAGIFLIFI. Topologically, residues 834 to 938 are cytoplasmic; that stretch reads EIAYKRHKDA…LQLCSRHRES (105 aa). Serine 889 bears the Phosphoserine; by PKC mark. A disordered region spans residues 889–938; sequence SSFKRRRSSKDTSTGGGRGALQNQKDTVLPRRAIEREEGQLQLCSRHRES. Residue serine 890 is modified to Phosphoserine. Phosphoserine; by PKC is present on residues serine 896 and serine 897. Over residues 916-927 the composition is skewed to basic and acidic residues; that stretch reads VLPRRAIEREEG.

It belongs to the glutamate-gated ion channel (TC 1.A.10.1) family. NR1/GRIN1 subfamily. Heterotetramer; the NMDAR subunits are modular and harbor tiered domains that function in concert to regulate opening and closing of the cation-selective ion channel pore. Forms heterotetrameric channels composed of two GluN1/zeta subunits (GRIN1), and two identical GluN2/epsilon subunits (GRIN2A, GRIN2B, GRIN2C or GRIN2D) or GluN3 subunits (GRIN3A or GRIN3B) (in vitro). Can also form heterotetrameric channels that contain at least two GluN1 subunits and at least two different GluN2 subunits (or a combination of one GluN2 and one GluN3 subunits) (in vitro). In vivo, the subunit composition may vary in function of the expression levels of the different subunits. Found in a complex with GRIN2A or GRIN2B, GRIN3A and PPP2CB. Found in a complex with GRIN2A or GRIN2B and GRIN3B. Interacts with SNX27 (via PDZ domain); the interaction is required for recycling to the plasma membrane when endocytosed and prevent degradation in lysosomes. Interacts with DLG4 and MPDZ. Interacts with LRFN1 and LRFN2. Interacts with MYZAP. Found in a complex with DLG4 and PRR7. Found in a complex with GRIN2B and PRR7. Interacts with PRR7; the interaction is reduced following NMDA receptor activity. Post-translationally, NMDA is probably regulated by C-terminal phosphorylation of an isoform of GRIN1 by PKC. Dephosphorylated on Ser-897 probably by protein phosphatase 2A (PPP2CB). Its phosphorylated state is influenced by the formation of the NMDAR-PPP2CB complex and the NMDAR channel activity. Detected in brain (at protein level). Detected in brain.

It localises to the cell membrane. The protein localises to the postsynaptic cell membrane. It is found in the postsynaptic density membrane. The protein resides in the synaptic cell membrane. It catalyses the reaction Ca(2+)(in) = Ca(2+)(out). The enzyme catalyses Na(+)(in) = Na(+)(out). It carries out the reaction K(+)(in) = K(+)(out). Component of N-methyl-D-aspartate (NMDA) receptors (NMDARs) that function as heterotetrameric, ligand-gated cation channels with high calcium permeability and voltage-dependent block by Mg(2+). NMDARs participate in synaptic plasticity for learning and memory formation by contributing to the long-term potentiation (LTP). Channel activation requires binding of the neurotransmitter L-glutamate to the GluN2 subunit, glycine or D-serine binding to the GluN1 subunit, plus membrane depolarization to eliminate channel inhibition by Mg(2+). NMDARs mediate simultaneously the potasium efflux and the influx of calcium and sodium. Each GluN2 or GluN3 subunit confers differential attributes to channel properties, including activation, deactivation and desensitization kinetics, pH sensitivity, Ca2(+) permeability, and binding to allosteric modulators. This is Glutamate receptor ionotropic, NMDA 1 from Mus musculus (Mouse).